Reading from the N-terminus, the 209-residue chain is Protein lin-28 homolog A (209 aa).

The interval 1–31 is disordered; sequence MGSVSNQQFAGGCAKAAEKAPEEAPPDAARA. Residue Gly2 is modified to N-acetylglycine. Position 3 is a phosphoserine (Ser3). One can recognise a CSD domain in the interval 39-112; that stretch reads HGAGICKWFN…GLESIRVTGP (74 aa). The flexible linker stretch occupies residues 113-136; it reads GGVFCIGSERRPKGKNMQKRRSKG. At Ser120 the chain carries Phosphoserine. 2 CCHC-type zinc fingers span residues 137 to 154 and 159 to 176; these read DRCYNCGGLDHHAKECKL and KKCHFCQSINHMVASCPL. The segment at 177–209 is disordered; that stretch reads KAQQGPSSQGKPAYFREEEEEIHSPALLPEAQN. Residue Ser200 is modified to Phosphoserine.

This sequence belongs to the lin-28 family. In terms of assembly, monomer. During skeletal muscle differentiation, associated with translation initiation complexes in the polysomal compartment. Directly interacts with EIF3S2. Interacts with NCL in an RNA-dependent manner. Interacts with TUT4 in the presence of pre-let-7 RNA. Expressed in embryonic stem cells (ES cells), spermatagonia and testis. Expressed in numerous epithelial tissues including the epithelia of the small intestine, the intralobular duct epithelium of the mammary gland and the epithelia of Henle's loop in the kidney and in the collecting duct (at protein level). Also expressed in the myocardium and skeletal muscle (at protein level).

Its subcellular location is the cytoplasm. It localises to the rough endoplasmic reticulum. The protein localises to the P-body. The protein resides in the stress granule. It is found in the nucleus. Its subcellular location is the nucleolus. Its function is as follows. RNA-binding protein that inhibits processing of pre-let-7 miRNAs and regulates translation of mRNAs that control developmental timing, pluripotency and metabolism. Seems to recognize a common structural G-quartet (G4) feature in its miRNA and mRNA targets. 'Translational enhancer' that drives specific mRNAs to polysomes and increases the efficiency of protein synthesis. Its association with the translational machinery and target mRNAs results in an increased number of initiation events per molecule of mRNA and, indirectly, in mRNA stabilization. Binds IGF2 mRNA, MYOD1 mRNA, ARBP/36B4 ribosomal protein mRNA and its own mRNA. Essential for skeletal muscle differentiation program through the translational up-regulation of IGF2 expression. Suppressor of microRNA (miRNA) biogenesis, including that of let-7, miR107, miR-143 and miR-200c. Specifically binds the miRNA precursors (pre-miRNAs), recognizing an 5'-GGAG-3' motif found in pre-miRNA terminal loop, and recruits TUT4 and TUT7 uridylyltransferaseS. This results in the terminal uridylation of target pre-miRNAs. Uridylated pre-miRNAs fail to be processed by Dicer and undergo degradation. The repression of let-7 expression is required for normal development and contributes to maintain the pluripotent state by preventing let-7-mediated differentiation of embryonic stem cells. Localized to the periendoplasmic reticulum area, binds to a large number of spliced mRNAs and inhibits the translation of mRNAs destined for the ER, reducing the synthesis of transmembrane proteins, ER or Golgi lumen proteins, and secretory proteins. Binds to and enhances the translation of mRNAs for several metabolic enzymes, such as PFKP, PDHA1 or SDHA, increasing glycolysis and oxidative phosphorylation. Which, with the let-7 repression may enhance tissue repair in adult tissue. The protein is Protein lin-28 homolog A (Lin28a) of Mus musculus (Mouse).